A 119-amino-acid polypeptide reads, in one-letter code: Large ribosomal subunit protein uL18 (119 aa).

It belongs to the universal ribosomal protein uL18 family. As to quaternary structure, part of the 50S ribosomal subunit; part of the 5S rRNA/L5/L18/L25 subcomplex. Contacts the 5S and 23S rRNAs.

This is one of the proteins that bind and probably mediate the attachment of the 5S RNA into the large ribosomal subunit, where it forms part of the central protuberance. The chain is Large ribosomal subunit protein uL18 from Xanthomonas axonopodis pv. citri (strain 306).